Reading from the N-terminus, the 301-residue chain is Homoserine O-acetyltransferase (301 aa).

Cys-142 acts as the Acyl-thioester intermediate in catalysis. Substrate is bound by residues Lys-163 and Ser-192. The active-site Proton acceptor is His-235. Glu-237 is an active-site residue. Arg-249 is a binding site for substrate.

The protein belongs to the MetA family.

It is found in the cytoplasm. It catalyses the reaction L-homoserine + acetyl-CoA = O-acetyl-L-homoserine + CoA. It functions in the pathway amino-acid biosynthesis; L-methionine biosynthesis via de novo pathway; O-acetyl-L-homoserine from L-homoserine: step 1/1. In terms of biological role, transfers an acetyl group from acetyl-CoA to L-homoserine, forming acetyl-L-homoserine. This Bacillus cytotoxicus (strain DSM 22905 / CIP 110041 / 391-98 / NVH 391-98) protein is Homoserine O-acetyltransferase.